The sequence spans 521 residues: Aspartic proteinase yapsin-1 (521 aa).

The first 17 residues, 1 to 17, serve as a signal peptide directing secretion; sequence MRIWILIFFSFIKLVSS. Over 18 to 500 the chain is Extracellular; sequence LQYTGNGVLA…NAVANAGNSF (483 aa). One can recognise a Peptidase A1 domain in the interval 67–409; that stretch reads YTTTLSIGRP…HQSQKMIAIG (343 aa). Aspartate 85 is an active-site residue. N-linked (GlcNAc...) asparagine glycosylation is found at asparagine 136, asparagine 157, asparagine 250, asparagine 289, asparagine 295, asparagine 354, asparagine 414, asparagine 418, asparagine 460, and asparagine 484. Residues 501-521 traverse the membrane as a helical segment; sequence SPLSAMVIMMMSAVFLGLGII.

Belongs to the peptidase A1 family.

Its subcellular location is the endoplasmic reticulum membrane. The protein resides in the secreted. It is found in the cell wall. Cleaves at paired basic residues. The chain is Aspartic proteinase yapsin-1 (yps1) from Schizosaccharomyces pombe (strain 972 / ATCC 24843) (Fission yeast).